Reading from the N-terminus, the 468-residue chain is Lipase 1 (468 aa).

A signal peptide spans 1-16 (MRGIAVFLAFISLIFA). Asn-79 carries an N-linked (GlcNAc...) asparagine glycan. Cys-112 and Cys-285 are disulfide-bonded. Catalysis depends on Ser-196, which acts as the Charge relay system. N-linked (GlcNAc...) asparagine glycosylation is found at Asn-231 and Asn-319. Residues Asp-348 and His-381 each act as charge relay system in the active site. Residues Cys-364 and Cys-409 are joined by a disulfide bond. N-linked (GlcNAc...) asparagine glycans are attached at residues Asn-417, Asn-422, and Asn-451.

It belongs to the AB hydrolase superfamily. Lipase family. Class Lip subfamily.

The protein localises to the secreted. The catalysed reaction is a triacylglycerol + H2O = a diacylglycerol + a fatty acid + H(+). Secreted lipase that is able to hydrolyze both the neutral triacylglycerols and the monopalmitate ester Tween 40, allowing the use of hydrolyzed products as carbon sources. Has broad lipolytic activity, which may be important for colonization and subsequent infection, therefore contributing to the persistence and virulence in human tissue. The polypeptide is Lipase 1 (Candida albicans (strain SC5314 / ATCC MYA-2876) (Yeast)).